A 146-amino-acid chain; its full sequence is Transcriptional regulator MraZ (146 aa).

2 SpoVT-AbrB domains span residues 5 to 47 and 76 to 119; these read EYYH…TITD and SIQV…AKEK.

Belongs to the MraZ family. As to quaternary structure, forms oligomers.

The protein localises to the cytoplasm. It is found in the nucleoid. The protein is Transcriptional regulator MraZ of Dictyoglomus thermophilum (strain ATCC 35947 / DSM 3960 / H-6-12).